The sequence spans 248 residues: Probable transcriptional regulatory protein BARBAKC583_0163 (248 aa).

Belongs to the TACO1 family.

The protein resides in the cytoplasm. The polypeptide is Probable transcriptional regulatory protein BARBAKC583_0163 (Bartonella bacilliformis (strain ATCC 35685 / KC583 / Herrer 020/F12,63)).